A 213-amino-acid chain; its full sequence is Cytochrome c biogenesis ATP-binding export protein CcmA (213 aa).

In terms of domain architecture, ABC transporter spans 7-213 (LKTKKLACQR…VRLENYKFTE (207 aa)). 39-46 (GHNGIGKT) contributes to the ATP binding site.

The protein belongs to the ABC transporter superfamily. CcmA exporter (TC 3.A.1.107) family. As to quaternary structure, the complex is composed of two ATP-binding proteins (CcmA) and two transmembrane proteins (CcmB).

It localises to the cell inner membrane. The enzyme catalyses heme b(in) + ATP + H2O = heme b(out) + ADP + phosphate + H(+). In terms of biological role, part of the ABC transporter complex CcmAB involved in the biogenesis of c-type cytochromes; once thought to export heme, this seems not to be the case, but its exact role is uncertain. Responsible for energy coupling to the transport system. This chain is Cytochrome c biogenesis ATP-binding export protein CcmA, found in Pasteurella multocida (strain Pm70).